A 419-amino-acid chain; its full sequence is G protein-activated inward rectifier potassium channel 4 (419 aa).

Topologically, residues 1 to 86 (MAGDSRNAMN…LFTTLVDLKW (86 aa)) are cytoplasmic. Residue Ser5 is modified to Phosphoserine. Residues 87–111 (RFNLLVFTMVYTVTWLFFGFIWWLI) traverse the membrane as a helical segment. Residues 112 to 135 (AYIRGDLDHVGDQEWIPCVENLSG) are Extracellular-facing. Residues 136 to 147 (FVSAFLFSIETE) constitute an intramembrane region (helical; Pore-forming). An intramembrane region (pore-forming) is located at residues 148–154 (TTIGYGF). Residues 149–154 (TIGYGF) carry the Selectivity filter motif. The Extracellular portion of the chain corresponds to 155–163 (RVITEKCPE). The chain crosses the membrane as a helical span at residues 164 to 185 (GIILLLVQAILGSIVNAFMVGC). Topologically, residues 186 to 419 (MFVKISQPKK…GGSREARGSV (234 aa)) are cytoplasmic. The disordered stretch occupies residues 390-419 (AEAGLDAEAEQNEEDEPKGLGGSREARGSV). Residues 394–405 (LDAEAEQNEEDE) show a composition bias toward acidic residues.

Belongs to the inward rectifier-type potassium channel (TC 1.A.2.1) family. KCNJ5 subfamily. As to quaternary structure, associates with KCNJ3/GIRK1 to form a G-protein-activated heteromultimer pore-forming unit. The resulting inward current is much larger. Associates with KCNJ6/GIRK2 to form a G-protein-activated heteromultimer pore-forming unit. In terms of tissue distribution, islets, exocrine pancreas and heart. Expressed in the adrenal cortex, particularly the zona glomerulosa.

The protein localises to the membrane. The enzyme catalyses K(+)(in) = K(+)(out). With respect to regulation, heteromultimer composed of KCNJ3/GIRK1 and KCNJ5/GIRK4 is activated by phosphatidylinositol 4,5 biphosphate (PtdIns(4,5)P2). Functionally, inward rectifier potassium channels are characterized by a greater tendency to allow potassium to flow into the cell rather than out of it. Their voltage dependence is regulated by the concentration of extracellular potassium; as external potassium is raised, the voltage range of the channel opening shifts to more positive voltages. The inward rectification is mainly due to the blockage of outward current by internal magnesium. Can be blocked by external barium. This potassium channel is controlled by G proteins. This chain is G protein-activated inward rectifier potassium channel 4 (KCNJ5), found in Homo sapiens (Human).